Consider the following 1361-residue polypeptide: DNA-directed RNA polymerase subunit beta'' (1361 aa).

Cysteine 224, cysteine 295, cysteine 302, and cysteine 305 together coordinate Zn(2+).

It belongs to the RNA polymerase beta' chain family. RpoC2 subfamily. In terms of assembly, in plastids the minimal PEP RNA polymerase catalytic core is composed of four subunits: alpha, beta, beta', and beta''. When a (nuclear-encoded) sigma factor is associated with the core the holoenzyme is formed, which can initiate transcription. Requires Zn(2+) as cofactor.

It is found in the plastid. It localises to the chloroplast. The catalysed reaction is RNA(n) + a ribonucleoside 5'-triphosphate = RNA(n+1) + diphosphate. Its function is as follows. DNA-dependent RNA polymerase catalyzes the transcription of DNA into RNA using the four ribonucleoside triphosphates as substrates. The sequence is that of DNA-directed RNA polymerase subunit beta'' from Spinacia oleracea (Spinach).